Reading from the N-terminus, the 285-residue chain is Phasyl DNA replicon protein arp (285 aa).

Functionally, essential for autonomous replication of the phasyl DNA replicon. This Escherichia coli protein is Phasyl DNA replicon protein arp (arp).